A 222-amino-acid polypeptide reads, in one-letter code: Glutathione transferase GST 23 (222 aa).

Residues 4-83 form the GST N-terminal domain; that stretch reads KGVKVLGMWA…YIDEVWKGGY (80 aa). Glutathione is bound by residues S14, K41, V55, and 67-68; that span reads ES. A GST C-terminal domain is found at 89 to 220; the sequence is DPYERAQARF…ANKARREQLL (132 aa).

This sequence belongs to the GST superfamily.

The catalysed reaction is RX + glutathione = an S-substituted glutathione + a halide anion + H(+). Functionally, involved in multiple disease resistance (MDR). The sequence is that of Glutathione transferase GST 23 from Zea mays (Maize).